The sequence spans 704 residues: Plasma membrane ATPase 2 (704 aa).

A helical membrane pass occupies residues 1–16 (CSIAVGMIIEIIVMYP). The Extracellular portion of the chain corresponds to 17–26 (IQHRKYRPGI). A helical membrane pass occupies residues 27 to 48 (DNLLVLLIGGIPIAMPTVLSVT). Residues 49 to 395 (MAIGSHRLAQ…TSRAIFQRMK (347 aa)) lie on the Cytoplasmic side of the membrane. Aspartate 81 serves as the catalytic 4-aspartylphosphate intermediate. 2 residues coordinate Mg(2+): aspartate 340 and aspartate 344. A helical membrane pass occupies residues 396-417 (NYTIYAVSITIRIVLGFMLLAL). The Extracellular segment spans residues 418–422 (IWKFD). A helical transmembrane segment spans residues 423-445 (FPPFMVLIIAILNDGTIMTISKD). Residues 446–461 (RVKPSPLPDSWKLAEI) lie on the Cytoplasmic side of the membrane. Residues 462–482 (FTTGVVLGGYLAMMTVIFFWA) form a helical membrane-spanning segment. The Extracellular portion of the chain corresponds to 483–507 (AYETQFFPRVFGVSTLQRTATDDFR). The chain crosses the membrane as a helical span at residues 508-528 (KLASAIYLQVSTISQALIFVT). Residues 529-540 (RSRSWSFVERPG) are Cytoplasmic-facing. The helical transmembrane segment at 541–561 (LLLVVALIVAQLVATLIAVYA) threads the bilayer. The Extracellular segment spans residues 562–570 (SWSFAAIEG). The helical transmembrane segment at 571–591 (IGWGWAGVIWLYNLVFYFPLD) threads the bilayer. Over 592-704 (IIKFLIRYAL…IETIQQSYTV (113 aa)) the chain is Cytoplasmic.

Belongs to the cation transport ATPase (P-type) (TC 3.A.3) family. Type IIIA subfamily. Possibly exists as a homodimer or a homotrimer.

The protein localises to the cell membrane. It carries out the reaction ATP + H2O + H(+)(in) = ADP + phosphate + 2 H(+)(out). Functionally, the plasma membrane ATPase of plants and fungi is a hydrogen ion pump. The proton gradient it generates drives the active transport of nutrients by H(+)-symport. The resulting external acidification and/or internal alkinization may mediate growth responses. This Solanum lycopersicum (Tomato) protein is Plasma membrane ATPase 2 (LHA2).